A 184-amino-acid polypeptide reads, in one-letter code: MGLEERLPGGILLSTVETVAGYVRKGSLWPATFGLACCAIEMMSTAGPRFDIARFGMERFSATPRQADLMIVAGRVSQKMAPVLRQIYDQMVEPKWVLAMGVCASSGGMFNNYAVVQGVDHVVPVDIYLPGCPPRPEMLLHAILKLHDKIQQMPLGVNREEAIREAEQAALAVPPTIELKGLLR.

4 residues coordinate [4Fe-4S] cluster: C37, C38, C103, and C132.

It belongs to the complex I 20 kDa subunit family. In terms of assembly, NDH-1 is composed of 14 different subunits. Subunits NuoB, C, D, E, F, and G constitute the peripheral sector of the complex. Requires [4Fe-4S] cluster as cofactor.

The protein resides in the cell membrane. It catalyses the reaction a quinone + NADH + 5 H(+)(in) = a quinol + NAD(+) + 4 H(+)(out). NDH-1 shuttles electrons from NADH, via FMN and iron-sulfur (Fe-S) centers, to quinones in the respiratory chain. The immediate electron acceptor for the enzyme in this species is believed to be a menaquinone. Couples the redox reaction to proton translocation (for every two electrons transferred, four hydrogen ions are translocated across the cytoplasmic membrane), and thus conserves the redox energy in a proton gradient. The polypeptide is NADH-quinone oxidoreductase subunit B (Mycolicibacterium smegmatis (strain ATCC 700084 / mc(2)155) (Mycobacterium smegmatis)).